A 272-amino-acid chain; its full sequence is Granaticin polyketide synthase putative ketoacyl reductase 1 (272 aa).

L21–F45 provides a ligand contact to NAD(+). S155 serves as a coordination point for substrate. The active-site Proton acceptor is Y168.

Belongs to the short-chain dehydrogenases/reductases (SDR) family.

The protein operates within antibiotic biosynthesis; granaticin biosynthesis. The sequence is that of Granaticin polyketide synthase putative ketoacyl reductase 1 (gra-orf5) from Streptomyces violaceoruber.